A 297-amino-acid chain; its full sequence is ER membrane protein complex subunit 2 (297 aa).

Position 2 is an N-acetylalanine (Ala2). TPR repeat units lie at residues 87–120 (HRVK…DPTN), 155–188 (QEAW…NPHN), and 192–225 (CQQY…NNRN). Lys255 is modified (N6-acetyllysine).

The protein belongs to the EMC2 family. As to quaternary structure, component of the ER membrane protein complex (EMC). Interacts with WNK1 (via amphipathic alpha-helix region); promoting the ER membrane protein complex assembly by preventing EMC2 ubiquitination. In terms of processing, ubiquitinated when soluble in the cytoplasm, leading to its degradation by the proteasome. Interaction with EMC2 prevents its ubiquitination and degradation.

It localises to the endoplasmic reticulum membrane. Part of the endoplasmic reticulum membrane protein complex (EMC) that enables the energy-independent insertion into endoplasmic reticulum membranes of newly synthesized membrane proteins. Preferentially accommodates proteins with transmembrane domains that are weakly hydrophobic or contain destabilizing features such as charged and aromatic residues. Involved in the cotranslational insertion of multi-pass membrane proteins in which stop-transfer membrane-anchor sequences become ER membrane spanning helices. It is also required for the post-translational insertion of tail-anchored/TA proteins in endoplasmic reticulum membranes. By mediating the proper cotranslational insertion of N-terminal transmembrane domains in an N-exo topology, with translocated N-terminus in the lumen of the ER, controls the topology of multi-pass membrane proteins like the G protein-coupled receptors. By regulating the insertion of various proteins in membranes, it is indirectly involved in many cellular processes. In Pongo abelii (Sumatran orangutan), this protein is ER membrane protein complex subunit 2.